The sequence spans 212 residues: Regulatory protein RecX (212 aa).

The protein belongs to the RecX family.

It is found in the cytoplasm. In terms of biological role, modulates RecA activity. The chain is Regulatory protein RecX from Clostridium botulinum (strain Eklund 17B / Type B).